Reading from the N-terminus, the 181-residue chain is ADP-ribosylation factor 1 (181 aa).

Gly-2 carries the N-myristoyl glycine lipid modification. GTP-binding positions include 25 to 32, Thr-48, Gly-70, 126 to 129, and 160 to 161; these read LDGAGKTT, NKQD, and AT. A Glycyl lysine isopeptide (Lys-Gly) (interchain with G-Cter in ubiquitin) cross-link involves residue Lys-127.

It belongs to the small GTPase superfamily. Arf family. As to quaternary structure, interacts with RUD3. Interacts with VPS13 (via C-terminal part); the interaction is direct.

It is found in the golgi apparatus. It catalyses the reaction GTP + H2O = GDP + phosphate + H(+). Its function is as follows. GTP-binding protein involved in Golgi vesicle trafficking. May modulate vesicle budding and uncoating within the Golgi apparatus. May recruit the lipid transfer protein VPS13 to Golgi membranes. Recruits polyadenylate-binding protein PAB1 to COPI vesicles, and this is required for correct localization of the asymmetrically distributed ASH1 mRNA. The chain is ADP-ribosylation factor 1 (ARF1) from Saccharomyces cerevisiae (strain ATCC 204508 / S288c) (Baker's yeast).